A 107-amino-acid polypeptide reads, in one-letter code: Nucleoid-associated protein GbCGDNIH1_0260 (107 aa).

Belongs to the YbaB/EbfC family. Homodimer.

The protein localises to the cytoplasm. The protein resides in the nucleoid. In terms of biological role, binds to DNA and alters its conformation. May be involved in regulation of gene expression, nucleoid organization and DNA protection. The chain is Nucleoid-associated protein GbCGDNIH1_0260 from Granulibacter bethesdensis (strain ATCC BAA-1260 / CGDNIH1).